A 113-amino-acid chain; its full sequence is MNTVRVTFLLVFVLAVSLGQADKDENRMEMLEKTEQGKSYLDFAENLLLQKLEELEARLLEEDSEESRNSRQKRCIGEGVPRDENDPRCCSGLVCLKPTLHGIWYKSYYCYKK.

Positions 1-21 are cleaved as a signal peptide; it reads MNTVRVTFLLVFVLAVSLGQA. Residues 22 to 74 constitute a propeptide that is removed on maturation; the sequence is DKDENRMEMLEKTEQGKSYLDFAENLLLQKLEELEARLLEEDSEESRNSRQKR. Residues 60–69 show a composition bias toward basic and acidic residues; it reads LEEDSEESRN. A disordered region spans residues 60-87; it reads LEEDSEESRNSRQKRCIGEGVPRDENDP. Cystine bridges form between cysteine 75/cysteine 90 and cysteine 89/cysteine 110.

Belongs to the neurotoxin 14 (magi-1) family. 01 (HNTX-16) subfamily. As to expression, expressed by the venom gland.

The protein localises to the secreted. Functionally, probable ion channel inhibitor. In Cyriopagopus hainanus (Chinese bird spider), this protein is U11-theraphotoxin-Hhn1e.